The sequence spans 354 residues: Arginase (354 aa).

4 residues coordinate Mn(2+): His-136, Asp-159, His-161, and Asp-163. Residues Asn-165, Ser-172, and Asp-217 each contribute to the L-arginine site. Mn(2+) is bound by residues Asp-266 and Asp-268.

It belongs to the arginase family. Homotrimer; oligomerization is dependent on Mn(2+) binding. The cofactor is Mn(2+).

The enzyme catalyses L-arginine + H2O = urea + L-ornithine. The protein operates within nitrogen metabolism; urea cycle; L-ornithine and urea from L-arginine: step 1/1. In terms of biological role, catalyzes the hydrolysis of L-arginine into urea and L-ornithine, which is a precursor for polyamine biosynthesis. May play a role in parasite intra-hepatic development during the host liver stage. This is Arginase from Plasmodium berghei (strain Anka).